The sequence spans 327 residues: tRNA dimethylallyltransferase (327 aa).

Residue 14-21 (GPTASGKT) coordinates ATP. Residue 16–21 (TASGKT) coordinates substrate. 2 interaction with substrate tRNA regions span residues 39–42 (DSAL) and 163–167 (QRIQR).

It belongs to the IPP transferase family. In terms of assembly, monomer. Requires Mg(2+) as cofactor.

It catalyses the reaction adenosine(37) in tRNA + dimethylallyl diphosphate = N(6)-dimethylallyladenosine(37) in tRNA + diphosphate. In terms of biological role, catalyzes the transfer of a dimethylallyl group onto the adenine at position 37 in tRNAs that read codons beginning with uridine, leading to the formation of N6-(dimethylallyl)adenosine (i(6)A). The sequence is that of tRNA dimethylallyltransferase from Xanthomonas euvesicatoria pv. vesicatoria (strain 85-10) (Xanthomonas campestris pv. vesicatoria).